A 456-amino-acid chain; its full sequence is tRNA-2-methylthio-N(6)-dimethylallyladenosine synthase (456 aa).

An MTTase N-terminal domain is found at Leu-19–Thr-136. Residues Cys-28, Cys-63, Cys-97, Cys-173, Cys-177, and Cys-180 each contribute to the [4Fe-4S] cluster site. The Radical SAM core domain maps to Gln-159–Lys-389. Positions Lys-392–Glu-455 constitute a TRAM domain.

It belongs to the methylthiotransferase family. MiaB subfamily. As to quaternary structure, monomer. Requires [4Fe-4S] cluster as cofactor.

The protein localises to the cytoplasm. It carries out the reaction N(6)-dimethylallyladenosine(37) in tRNA + (sulfur carrier)-SH + AH2 + 2 S-adenosyl-L-methionine = 2-methylsulfanyl-N(6)-dimethylallyladenosine(37) in tRNA + (sulfur carrier)-H + 5'-deoxyadenosine + L-methionine + A + S-adenosyl-L-homocysteine + 2 H(+). Functionally, catalyzes the methylthiolation of N6-(dimethylallyl)adenosine (i(6)A), leading to the formation of 2-methylthio-N6-(dimethylallyl)adenosine (ms(2)i(6)A) at position 37 in tRNAs that read codons beginning with uridine. This chain is tRNA-2-methylthio-N(6)-dimethylallyladenosine synthase, found in Lachnoclostridium phytofermentans (strain ATCC 700394 / DSM 18823 / ISDg) (Clostridium phytofermentans).